Consider the following 206-residue polypeptide: Ras-related protein Rab7 (206 aa).

GTP-binding positions include 15–22, 63–67, and 125–128; these read GDTGVGKT, DTAGQ, and NKID. S-geranylgeranyl cysteine attachment occurs at residues Cys204 and Cys206. Cys206 carries the post-translational modification Cysteine methyl ester.

Belongs to the small GTPase superfamily. Rab family.

The protein resides in the cell membrane. Functionally, protein transport. Probably involved in vesicular traffic. The chain is Ras-related protein Rab7 from Vigna aconitifolia (Moth bean).